The following is a 139-amino-acid chain: ATP synthase epsilon chain (139 aa).

It belongs to the ATPase epsilon chain family. In terms of assembly, F-type ATPases have 2 components, CF(1) - the catalytic core - and CF(0) - the membrane proton channel. CF(1) has five subunits: alpha(3), beta(3), gamma(1), delta(1), epsilon(1). CF(0) has three main subunits: a, b and c.

Its subcellular location is the cell inner membrane. Produces ATP from ADP in the presence of a proton gradient across the membrane. This is ATP synthase epsilon chain from Salmonella typhimurium (strain LT2 / SGSC1412 / ATCC 700720).